The chain runs to 318 residues: Ribosomal RNA small subunit methyltransferase H (318 aa).

S-adenosyl-L-methionine is bound by residues 37–39 (GGH), D57, F83, D104, and Q111.

This sequence belongs to the methyltransferase superfamily. RsmH family.

It is found in the cytoplasm. The catalysed reaction is cytidine(1402) in 16S rRNA + S-adenosyl-L-methionine = N(4)-methylcytidine(1402) in 16S rRNA + S-adenosyl-L-homocysteine + H(+). In terms of biological role, specifically methylates the N4 position of cytidine in position 1402 (C1402) of 16S rRNA. This chain is Ribosomal RNA small subunit methyltransferase H, found in Neisseria gonorrhoeae (strain ATCC 700825 / FA 1090).